Reading from the N-terminus, the 333-residue chain is Tryptophan--tRNA ligase (333 aa).

Residues Q9–T11 and G17–N18 each bind ATP. The 'HIGH' region signature appears at P10–N18. D140 lines the L-tryptophan pocket. Residues G152–D154, I191, and K200–S204 each bind ATP. The 'KMSKS' region motif lies at K200–S204.

The protein belongs to the class-I aminoacyl-tRNA synthetase family. In terms of assembly, homodimer.

The protein resides in the cytoplasm. The catalysed reaction is tRNA(Trp) + L-tryptophan + ATP = L-tryptophyl-tRNA(Trp) + AMP + diphosphate + H(+). Functionally, catalyzes the attachment of tryptophan to tRNA(Trp). The chain is Tryptophan--tRNA ligase from Ureaplasma parvum serovar 3 (strain ATCC 700970).